The sequence spans 610 residues: Myoneurin (610 aa).

One can recognise a BTB domain in the interval C24 to S89. The interval Q169–V197 is disordered. 2 consecutive short sequence motifs (nuclear localization signal) follow at residues K174–K190 and K257–K262. Polar residues predominate over residues S188 to V197. S289 is subject to Phosphoserine. 8 C2H2-type zinc fingers span residues P302 to H324, Y330 to H352, Y358 to H381, Y387 to H409, Y415 to H437, Y443 to H465, Y471 to H493, and F499 to H522. A disordered region spans residues V521–K556. Over residues S523 to S539 the composition is skewed to basic and acidic residues. The segment covering E540 to S550 has biased composition (polar residues).

This sequence belongs to the krueppel C2H2-type zinc-finger protein family. In terms of tissue distribution, mainly expressed in the neuromuscular system. Located in and around synaptic myonuclei in adult muscle. Expression is dysregulated after nerve injury. Also found in the testis, ovary and placenta.

It localises to the nucleus. This Homo sapiens (Human) protein is Myoneurin (MYNN).